The sequence spans 495 residues: Lysine--tRNA ligase (495 aa).

Residues Glu406 and Glu413 each contribute to the Mg(2+) site.

Belongs to the class-II aminoacyl-tRNA synthetase family. As to quaternary structure, homodimer. It depends on Mg(2+) as a cofactor.

Its subcellular location is the cytoplasm. The enzyme catalyses tRNA(Lys) + L-lysine + ATP = L-lysyl-tRNA(Lys) + AMP + diphosphate. This Staphylococcus aureus (strain COL) protein is Lysine--tRNA ligase.